A 360-amino-acid polypeptide reads, in one-letter code: Phospho-N-acetylmuramoyl-pentapeptide-transferase (360 aa).

A run of 10 helical transmembrane segments spans residues 26-46 (AILG…KMIA), 73-93 (TMGG…WGDL), 97-117 (YVWV…IDDY), 132-152 (WKYL…YASA), 168-188 (VMPQ…VGSS), 199-219 (GLAI…AYLS), 236-256 (AGEL…FLWF), 263-283 (VFMG…IAVL), 288-308 (ILLV…ILQV), and 338-358 (VIVR…ATLK).

It belongs to the glycosyltransferase 4 family. MraY subfamily. Mg(2+) is required as a cofactor.

It localises to the cell inner membrane. The enzyme catalyses UDP-N-acetyl-alpha-D-muramoyl-L-alanyl-gamma-D-glutamyl-meso-2,6-diaminopimeloyl-D-alanyl-D-alanine + di-trans,octa-cis-undecaprenyl phosphate = di-trans,octa-cis-undecaprenyl diphospho-N-acetyl-alpha-D-muramoyl-L-alanyl-D-glutamyl-meso-2,6-diaminopimeloyl-D-alanyl-D-alanine + UMP. It participates in cell wall biogenesis; peptidoglycan biosynthesis. Its function is as follows. Catalyzes the initial step of the lipid cycle reactions in the biosynthesis of the cell wall peptidoglycan: transfers peptidoglycan precursor phospho-MurNAc-pentapeptide from UDP-MurNAc-pentapeptide onto the lipid carrier undecaprenyl phosphate, yielding undecaprenyl-pyrophosphoryl-MurNAc-pentapeptide, known as lipid I. The sequence is that of Phospho-N-acetylmuramoyl-pentapeptide-transferase from Shewanella halifaxensis (strain HAW-EB4).